The sequence spans 77 residues: DinI-like protein in retron Ec67 (77 aa).

It belongs to the DinI family.

The chain is DinI-like protein in retron Ec67 from Escherichia coli.